A 182-amino-acid polypeptide reads, in one-letter code: Putative minor fimbrial subunit PmfF (182 aa).

The N-terminal stretch at 1–22 is a signal peptide; it reads MKNSIIKSAITCLLLLSPSTFA.

Belongs to the fimbrial protein family.

The protein localises to the fimbrium. The sequence is that of Putative minor fimbrial subunit PmfF (pmfF) from Proteus mirabilis (strain HI4320).